The sequence spans 624 residues: Ceramide transfer protein (624 aa).

Residues Met-1–Gly-11 show a composition bias toward polar residues. The tract at residues Met-1–Val-24 is disordered. The 95-residue stretch at Pro-23–Thr-117 folds into the PH domain. Ser-126 bears the Phosphoserine mark. A Phosphoserine; by PKD modification is found at Ser-132. Residue Ser-135 is modified to Phosphoserine. Positions Ile-263–His-303 form a coiled coil. Ser-315 is subject to Phosphoserine. The FFAT motif lies at Glu-321 to Glu-327. At Tyr-372 the chain carries Phosphotyrosine. A phosphoserine mark is found at Ser-373, Ser-377, and Ser-380. One can recognise an START domain in the interval Asp-389–Ala-618. An N-acylsphing-4-enine contacts are provided by Glu-472, Gln-493, Asn-530, and Tyr-579.

Interacts with VAPA and VAPB. Interaction with VAPB is less efficient than with VAPA. Interacts (via FFAT motif) with MOSPD2 (via MSP domain). In terms of processing, phosphorylation on Ser-132 decreases the affinity toward phosphatidylinositol 4-phosphate at Golgi membranes and reduces ceramide transfer activity. Inactivated by hyperphosphorylation of serine residues by CSNK1G2/CK1 that triggers dissociation from the Golgi complex, thus down-regulating ER-to-Golgi transport of ceramide and sphingomyelin synthesis. Widely expressed.

The protein localises to the cytoplasm. The protein resides in the golgi apparatus. It is found in the endoplasmic reticulum. The catalysed reaction is N-hexadecanoylsphing-4-enine(in) = N-hexadecanoylsphing-4-enine(out). Shelters ceramides and diacylglycerol lipids inside its START domain and mediates the intracellular trafficking of ceramides and diacylglycerol lipids in a non-vesicular manner. This Homo sapiens (Human) protein is Ceramide transfer protein.